The chain runs to 253 residues: Ubiquinone/menaquinone biosynthesis C-methyltransferase UbiE (253 aa).

S-adenosyl-L-methionine-binding positions include T76, D97, and 125 to 126; that span reads NA.

This sequence belongs to the class I-like SAM-binding methyltransferase superfamily. MenG/UbiE family.

It carries out the reaction a 2-demethylmenaquinol + S-adenosyl-L-methionine = a menaquinol + S-adenosyl-L-homocysteine + H(+). It catalyses the reaction a 2-methoxy-6-(all-trans-polyprenyl)benzene-1,4-diol + S-adenosyl-L-methionine = a 5-methoxy-2-methyl-3-(all-trans-polyprenyl)benzene-1,4-diol + S-adenosyl-L-homocysteine + H(+). It functions in the pathway quinol/quinone metabolism; menaquinone biosynthesis; menaquinol from 1,4-dihydroxy-2-naphthoate: step 2/2. It participates in cofactor biosynthesis; ubiquinone biosynthesis. Its function is as follows. Methyltransferase required for the conversion of demethylmenaquinol (DMKH2) to menaquinol (MKH2) and the conversion of 2-polyprenyl-6-methoxy-1,4-benzoquinol (DDMQH2) to 2-polyprenyl-3-methyl-6-methoxy-1,4-benzoquinol (DMQH2). This is Ubiquinone/menaquinone biosynthesis C-methyltransferase UbiE from Bradyrhizobium sp. (strain BTAi1 / ATCC BAA-1182).